Reading from the N-terminus, the 437-residue chain is Trigger factor (437 aa).

Residues 163–248 form the PPIase FKBP-type domain; that stretch reads GDRVIIDFEG…LNNVSEPTLP (86 aa).

It belongs to the FKBP-type PPIase family. Tig subfamily.

It is found in the cytoplasm. The enzyme catalyses [protein]-peptidylproline (omega=180) = [protein]-peptidylproline (omega=0). Involved in protein export. Acts as a chaperone by maintaining the newly synthesized protein in an open conformation. Functions as a peptidyl-prolyl cis-trans isomerase. The chain is Trigger factor from Neisseria gonorrhoeae (strain NCCP11945).